The chain runs to 446 residues: Gasdermin-A (446 aa).

The triggers pyroptosis stretch occupies residues 1 to 252 (MTMFENVTRA…FILIQASDVG (252 aa)). 9 to 13 (RALAR) lines the a cardiolipin pocket. The next 4 membrane-spanning stretches (beta stranded) occupy residues 78 to 95 (NFSF…DVDV), 99 to 120 (VKVK…TLSV), 164 to 180 (VTLE…SLPF), and 184 to 198 (LGLQ…AVTI).

The protein belongs to the gasdermin family. In terms of assembly, homooligomer; homooligomeric ring-shaped pore complex containing 18-36 subunits when inserted in the membrane. Post-translationally, cleavage by bacterial SpeB relieves autoinhibition by releasing the N-terminal moiety (Gasdermin-A, N-terminal) that initiates pyroptosis. Palmitoylated. As to expression, expressed predominantly in the gastrointestinal (GI) tract and in the skin at a lower level. In the GI tract, the expression is highly restricted to the esophagus and forestomach.

Its subcellular location is the cytoplasm. The protein resides in the perinuclear region. The protein localises to the cytosol. It localises to the cell membrane. The full-length protein before cleavage is inactive: intramolecular interactions between N- and C-terminal domains mediate autoinhibition in the absence of activation signal. The intrinsic pyroptosis-inducing activity is carried by the released N-terminal moiety (Gasdermin-A, N-terminal) following cleavage by bacterial effector protein SpeB. Its function is as follows. This form constitutes the precursor of the pore-forming protein and acts as a sensor of bacterial infection: upon infection, specifically cleaved by bacterial effector protein SpeB in epithelial cells, releasing the N-terminal moiety (Gasdermin-A, N-terminal) that binds to membranes and forms pores, triggering pyroptosis. Pore-forming protein that causes membrane permeabilization and pyroptosis. Released upon cleavage by bacterial effector protein SpeB, and binds to membrane inner leaflet lipids. Homooligomerizes within the membrane and forms pores of 10-15 nanometers (nm) of inner diameter, triggering pyroptosis. Pyroptosis triggers the elimination of the infected skin cell, depriving the pathogen of its protective niche, while inducing an inflammatory response. This ultimately prevents bacterial penetration of the epithelial barrier and a subsequent systemic dissemination of the pathogen. Binds to cardiolipin and other acidic phospholipids, such as phosphatidylserine, which mediate its targeting to the inner leaflet membrane. This chain is Gasdermin-A (Gsdma), found in Mus musculus (Mouse).